We begin with the raw amino-acid sequence, 52 residues long: Large ribosomal subunit protein bL33 (52 aa).

Belongs to the bacterial ribosomal protein bL33 family.

The chain is Large ribosomal subunit protein bL33 from Chlamydia trachomatis serovar L2 (strain ATCC VR-902B / DSM 19102 / 434/Bu).